A 356-amino-acid polypeptide reads, in one-letter code: Probable cysteine protease RDL6 (356 aa).

Residues 1–26 form the signal peptide; the sequence is MGFVRPVCMTILFLLIVFVLSAPSSA. Positions 27–132 are cleaved as a propeptide — activation peptide; it reads MDLPATSGGH…RRYVPLAGDQ (106 aa). Asparagine 37 and asparagine 86 each carry an N-linked (GlcNAc...) asparagine glycan. 3 disulfide bridges follow: cysteine 154–cysteine 195, cysteine 188–cysteine 229, and cysteine 288–cysteine 339. The active site involves cysteine 157. Catalysis depends on residues histidine 294 and asparagine 314.

This sequence belongs to the peptidase C1 family.

Probable thiol protease. This Arabidopsis thaliana (Mouse-ear cress) protein is Probable cysteine protease RDL6.